A 213-amino-acid polypeptide reads, in one-letter code: MGVCVFFPLCLPCPGALTYIREAQFISSWTPADPRHKQLKMFLQRFVTVGGAAIGARSTMGAMGAIGAIGAKGTMNNIGRRMYHPKVIEHYTHPRNVGSMDKTLPNVGTGLVGAPACGDVMRLQIKVNDKTGVIEDVKFKTFGCGSAIASSSYMTELVHGMTLDDAAKIKNTTIAKELSLPPVKLHCSMLAEDAIKAAIKDYKSKRTSTTTLH.

This sequence belongs to the NifU family. In terms of assembly, component of the core Fe-S cluster (ISC) assembly machinery. Requires [2Fe-2S] cluster as cofactor.

The protein resides in the mitochondrion matrix. Its pathway is cofactor biosynthesis; iron-sulfur cluster biosynthesis. Scaffold protein for the de novo synthesis of iron-sulfur (Fe-S) clusters within mitochondria, which is required for maturation of both mitochondrial and cytoplasmic [2Fe-2S] and [4Fe-4S] proteins. First, a [2Fe-2S] cluster is transiently assembled on the scaffold protein ISU1. In a second step, the cluster is released from ISU1, transferred to a glutaredoxin, followed by the formation of mitochondrial [2Fe-2S] proteins, the synthesis of [4Fe-4S] clusters and their target-specific insertion into the recipient apoproteins. Cluster assembly on ISU1 depends on the function of the cysteine desulfurase complex NFS1-ISD11, which serves as the sulfur donor for cluster synthesis, the iron-binding protein frataxin as the putative iron donor, and the electron transfer chain comprised of ferredoxin reductase and ferredoxin, which receive their electrons from NADH. This Candida glabrata (strain ATCC 2001 / BCRC 20586 / JCM 3761 / NBRC 0622 / NRRL Y-65 / CBS 138) (Yeast) protein is Iron sulfur cluster assembly protein 1, mitochondrial (ISU1).